Here is a 960-residue protein sequence, read N- to C-terminus: MTQTLTQLENSDAFIARHIGPTPEEQQQMLAQIGAADLDTLLARIVPADIQLPAAPPIGAACSEQQALDELRAIAAQNQCYRSFIGMGYYGVQTPPAIQRNMLENPGWYTAYTPYQPEVSQGRLEALLNFQQMTLDLTGLDLASASLLDEATAAAEAMGLARRASRLKQANTFFIAQDVHPQTIDVVCTRAQSCGVEVIIDDARRAADHRDLFGVLLQQVGTQGDLHDYRALMDSLRERGVITCMAADPLALVLLEAPGRQGADVVFGSAQRFGVPMGYGGPHAAFFACREAFKRAMPGRIIGVARDAAGEPALRMAMQTREQHIRREKANSNICTSQVLLANIAGMYAVYHGPQGLRRIAERVHRLADILALGLQQKGVTLRNHCWFDTLTVAVPDKGAVLARALGFGINLRGDLDGAVGISFDECSTRDDLEALFTILLGDGHALDIDTLDTLVQEACEGSIPAALLRREPILTHPVFNRYHSETALMRYMHALERRDLALNQAMIPLGSCTMKLNAAAEMIPITWPEFAALHPFCPPEQAQGYRLLLSQLAEWLVQLTGYDAVCLQPNSGAQGEYAGLLAIRRYHESRGEGQRTRCLIPASAHGTNPASAQMAGMEVEVVACDEQGNIDLHDLRERARQAGERLAAIMVTYPSTHGVYEETIREVCQIVHQYGGQVYLDGANMNAQVGITTPGYIGADVSHLNLHKTFAIPHGGGGPGMGPIGVKAHLAPFVPGHRVVQLAGLTTRQGAVSAAPFGSASILPISWMYIRMMGAEGLRRASTVAILNANYIARRLGAVYPVLYRGKEGYVAHECILDLRPLKARSGISEMDIAKRLIDYGFHAPTMSFPVAGTLMVEPTESENKAELDRFIAAMLAIHDEITRVETGEWPLQDNPLVNAPHTQRELVGEWHHPYGRELAVFPTPQTRENKYWPAVKRLDDVYGDRHLQCSCPPLSDWA.

Lysine 709 carries the N6-(pyridoxal phosphate)lysine modification.

This sequence belongs to the GcvP family. The glycine cleavage system is composed of four proteins: P, T, L and H. Requires pyridoxal 5'-phosphate as cofactor.

It carries out the reaction N(6)-[(R)-lipoyl]-L-lysyl-[glycine-cleavage complex H protein] + glycine + H(+) = N(6)-[(R)-S(8)-aminomethyldihydrolipoyl]-L-lysyl-[glycine-cleavage complex H protein] + CO2. The glycine cleavage system catalyzes the degradation of glycine. The P protein binds the alpha-amino group of glycine through its pyridoxal phosphate cofactor; CO(2) is released and the remaining methylamine moiety is then transferred to the lipoamide cofactor of the H protein. This is Glycine dehydrogenase (decarboxylating) from Edwardsiella ictaluri (strain 93-146).